Here is an 84-residue protein sequence, read N- to C-terminus: Large ribosomal subunit protein bL27 (84 aa).

The interval 1–25 (MAHKKGQGSTQNNRDSAGRRLGVKK) is disordered.

This sequence belongs to the bacterial ribosomal protein bL27 family.

The protein is Large ribosomal subunit protein bL27 of Sulfurovum sp. (strain NBC37-1).